A 281-amino-acid chain; its full sequence is 4-diphosphocytidyl-2-C-methyl-D-erythritol kinase (281 aa).

Lysine 15 is a catalytic residue. Residue 98 to 108 (PTGAGLGGGSS) participates in ATP binding. Residue aspartate 140 is part of the active site.

This sequence belongs to the GHMP kinase family. IspE subfamily.

It carries out the reaction 4-CDP-2-C-methyl-D-erythritol + ATP = 4-CDP-2-C-methyl-D-erythritol 2-phosphate + ADP + H(+). It participates in isoprenoid biosynthesis; isopentenyl diphosphate biosynthesis via DXP pathway; isopentenyl diphosphate from 1-deoxy-D-xylulose 5-phosphate: step 3/6. In terms of biological role, catalyzes the phosphorylation of the position 2 hydroxy group of 4-diphosphocytidyl-2C-methyl-D-erythritol. This Neisseria meningitidis serogroup B (strain ATCC BAA-335 / MC58) protein is 4-diphosphocytidyl-2-C-methyl-D-erythritol kinase.